The sequence spans 409 residues: Imidazolonepropionase (409 aa).

His-70 and His-72 together coordinate Fe(3+). Zn(2+) contacts are provided by His-70 and His-72. Residues Arg-79, Tyr-137, and His-164 each coordinate 4-imidazolone-5-propanoate. N-formimidoyl-L-glutamate is bound at residue Tyr-137. His-225 contacts Fe(3+). His-225 is a Zn(2+) binding site. Gln-228 lines the 4-imidazolone-5-propanoate pocket. Residues Asn-314 and Gly-316 each contribute to the N-formimidoyl-L-glutamate site. Thr-317 is a binding site for 4-imidazolone-5-propanoate.

This sequence belongs to the metallo-dependent hydrolases superfamily. HutI family. Zn(2+) is required as a cofactor. Requires Fe(3+) as cofactor.

Its subcellular location is the cytoplasm. It carries out the reaction 4-imidazolone-5-propanoate + H2O = N-formimidoyl-L-glutamate. It participates in amino-acid degradation; L-histidine degradation into L-glutamate; N-formimidoyl-L-glutamate from L-histidine: step 3/3. In terms of biological role, catalyzes the hydrolytic cleavage of the carbon-nitrogen bond in imidazolone-5-propanoate to yield N-formimidoyl-L-glutamate. It is the third step in the universal histidine degradation pathway. The protein is Imidazolonepropionase of Paenarthrobacter aurescens (strain TC1).